A 544-amino-acid chain; its full sequence is Carboxypeptidase Y homolog A (544 aa).

The signal sequence occupies residues methionine 1–glycine 17. Positions proline 18–lysine 124 are excised as a propeptide. 5 disulfide bridges follow: cysteine 178–cysteine 417, cysteine 312–cysteine 326, cysteine 336–cysteine 359, cysteine 343–cysteine 352, and cysteine 381–cysteine 387. A glycan (N-linked (GlcNAc...) asparagine) is linked at asparagine 209. Serine 265 is a catalytic residue. Residue aspartate 456 is part of the active site. A glycan (N-linked (GlcNAc...) asparagine) is linked at asparagine 506. Residue histidine 517 is part of the active site.

It belongs to the peptidase S10 family.

It localises to the vacuole. It catalyses the reaction Release of a C-terminal amino acid with broad specificity.. Vacuolar carboxypeptidase involved in degradation of small peptides. Digests preferentially peptides containing an aliphatic or hydrophobic residue in P1' position, as well as methionine, leucine or phenylalanine in P1 position of ester substrate. The chain is Carboxypeptidase Y homolog A (CPYA) from Ajellomyces capsulatus (strain G186AR / H82 / ATCC MYA-2454 / RMSCC 2432) (Darling's disease fungus).